Consider the following 459-residue polypeptide: Asperlicin C monooxygenase (459 aa).

FAD is bound by residues Asp-49, Ala-62, and Arg-121. Residue Arg-199 is part of the active site. Asp-323 and Ala-336 together coordinate FAD.

It belongs to the paxM FAD-dependent monooxygenase family. The cofactor is FAD.

The enzyme catalyses asperlicin C + NADPH + O2 + H(+) = asperlicin E + NADP(+) + H2O. It carries out the reaction asperlicin C + NADH + O2 + H(+) = asperlicin E + NAD(+) + H2O. Its function is as follows. Catalyzes the conversion of asperlicin A to form asperlicin E, a potent cholecystokinin receptor CCK(A) antagonist. The sequence is that of Asperlicin C monooxygenase from Petromyces alliaceus (Aspergillus alliaceus).